The primary structure comprises 131 residues: T3C protein (131 aa).

This Ovis aries (Sheep) protein is T3C protein.